The following is a 1068-amino-acid chain: Self-sufficient cytochrome P450 monooxygenase CYP505U2 (1068 aa).

Cys-408 serves as a coordination point for heme. A disordered region spans residues 464–498; that stretch reads TTAGMVPESVQSLRQAQKSGKPGNSKSSANESMVG. Residues 472–498 are compositionally biased toward polar residues; it reads SVQSLRQAQKSGKPGNSKSSANESMVG. Positions 505–646 constitute a Flavodoxin-like domain; it reads VSIFYGSNSG…DLEKWEESIL (142 aa). FMN is bound by residues 511 to 515 and 590 to 622; these read SNSGS and VFGC…QRVA. The region spanning 679–909 is the FAD-binding FR-type domain; it reads KEFLEATVTS…RRSNPAFHPP (231 aa).

In the N-terminal section; belongs to the cytochrome P450 family. The cofactor is FAD. It depends on FMN as a cofactor. Heme serves as cofactor.

The catalysed reaction is 2 oxidized [cytochrome P450] + NADPH = 2 reduced [cytochrome P450] + NADP(+) + H(+). The enzyme catalyses an organic molecule + reduced [NADPH--hemoprotein reductase] + O2 = an alcohol + oxidized [NADPH--hemoprotein reductase] + H2O + H(+). It catalyses the reaction dodecanoate + reduced [NADPH--hemoprotein reductase] + O2 = 3-hydroxydodecanoate + oxidized [NADPH--hemoprotein reductase] + H2O + H(+). It carries out the reaction dodecanoate + reduced [NADPH--hemoprotein reductase] + O2 = 7-hydroxydodecanoate + oxidized [NADPH--hemoprotein reductase] + H2O + H(+). The catalysed reaction is dodecan-1-ol + reduced [NADPH--hemoprotein reductase] + O2 = 1,4-dodecanediol + oxidized [NADPH--hemoprotein reductase] + H2O + H(+). The enzyme catalyses dodecan-1-ol + reduced [NADPH--hemoprotein reductase] + O2 = 1,3-dodecanediol + oxidized [NADPH--hemoprotein reductase] + H2O + H(+). Self-sufficient cytochrome P450 monooxygenase that catalyzes the regioselective in-chain hydroxylation of alkanes, fatty alcohols, and fatty acids. Preferentially hydroxylates 1-dodecanol at C3 and C4 (positions omega-8 and omega-9). It is very likely that CYP505U2 prefers dodecanol, and probably other fatty alcohols, over fatty acids as substrates. Does not show any significant activity toward tetradecanoic acid. This chain is Self-sufficient cytochrome P450 monooxygenase CYP505U2, found in Exserohilum turcicum (strain 28A) (Northern leaf blight fungus).